Consider the following 190-residue polypeptide: Threonylcarbamoyl-AMP synthase (190 aa).

Residues 7-190 (SEAVAHAVAV…ALTGELFRQG (184 aa)) enclose the YrdC-like domain.

Belongs to the SUA5 family. TsaC subfamily.

It is found in the cytoplasm. The catalysed reaction is L-threonine + hydrogencarbonate + ATP = L-threonylcarbamoyladenylate + diphosphate + H2O. Its function is as follows. Required for the formation of a threonylcarbamoyl group on adenosine at position 37 (t(6)A37) in tRNAs that read codons beginning with adenine. Catalyzes the conversion of L-threonine, HCO(3)(-)/CO(2) and ATP to give threonylcarbamoyl-AMP (TC-AMP) as the acyladenylate intermediate, with the release of diphosphate. This Klebsiella pneumoniae subsp. pneumoniae (strain ATCC 700721 / MGH 78578) protein is Threonylcarbamoyl-AMP synthase.